The following is a 926-amino-acid chain: Taz1-interacting factor 1 (926 aa).

Coiled coils occupy residues Arg461 to Asn496 and Ser548 to Lys671. Residue Ser548 is modified to Phosphoserine. Thr550 is modified (phosphothreonine). Ser552 is modified (phosphoserine).

The protein belongs to the ATG11 family. Homodimer and potential homooligomers. Interacts with taz1.

The protein localises to the preautophagosomal structure membrane. Its subcellular location is the vacuole membrane. Its function is as follows. Involved in cytoplasm to vacuole transport (Cvt), pexophagy, mitophagy and nucleophagy. Recruits mitochondria for their selective degradation via autophagy (mitophagy) during starvation. Works as scaffold proteins that recruit ATG proteins to the preautophagosome (PAS), the site of vesicle/autophagosome formation. Required for atg9 anterograde transport from the mitochondria to the PAS. Required for nitrogen starvation-induced sexual development and for entering the dormant G0 state. This chain is Taz1-interacting factor 1 (taf1), found in Schizosaccharomyces pombe (strain 972 / ATCC 24843) (Fission yeast).